The primary structure comprises 99 residues: UPF0751 protein BCAH820_B0138 (99 aa).

Belongs to the UPF0751 family.

This Bacillus cereus (strain AH820) protein is UPF0751 protein BCAH820_B0138.